Here is a 281-residue protein sequence, read N- to C-terminus: Apolipoprotein E (281 aa).

The first 18 residues, 1 to 18, serve as a signal peptide directing secretion; that stretch reads MKVLWAALLIALLAGCQG. A run of 5 repeats spans residues 82 to 103, 104 to 125, 126 to 147, 148 to 169, and 198 to 219. Residues 82–219 form a 5 X 22 AA approximate tandem repeats region; that stretch reads ALMDETMKEL…RLDEVKEQVE (138 aa). Met145 is subject to Methionine sulfoxide. Ser149 bears the Phosphoserine mark. Positions 160–170 are LDL and other lipoprotein receptors binding; it reads HLRKLRTVSYT. Heparin is bound by residues 164–167 and 193–200; these read LRTV and GERLRTRM. The homooligomerization stretch occupies residues 230 to 281; that stretch reads QQMRLQAEAFQARLKSWFEPLVEDMQRQWAGLVEKVQAAVGASAAPVPSDNH. Positions 242-254 are specificity for association with VLDL; sequence RLKSWFEPLVEDM.

Belongs to the apolipoprotein A1/A4/E family. Homotetramer. May interact with ABCA1; functionally associated with ABCA1 in the biogenesis of HDLs. May interact with APP/A4 amyloid-beta peptide; the interaction is extremely stable in vitro but its physiological significance is unclear. May interact with MAPT. May interact with MAP2. In the cerebrospinal fluid, interacts with secreted SORL1. Interacts with PMEL; this allows the loading of PMEL luminal fragment on ILVs to induce fibril nucleation. Post-translationally, APOE exists as multiple glycosylated and sialylated glycoforms within cells and in plasma. The extent of glycosylation and sialylation are tissue and context specific. In terms of processing, glycated in plasma VLDL. Phosphorylated by FAM20C in the extracellular medium.

The protein resides in the secreted. Its subcellular location is the extracellular space. It is found in the extracellular matrix. The protein localises to the extracellular vesicle. It localises to the endosome. The protein resides in the multivesicular body. APOE is an apolipoprotein, a protein associating with lipid particles, that mainly functions in lipoprotein-mediated lipid transport between organs via the plasma and interstitial fluids. APOE is a core component of plasma lipoproteins and is involved in their production, conversion and clearance. Apolipoproteins are amphipathic molecules that interact both with lipids of the lipoprotein particle core and the aqueous environment of the plasma. As such, APOE associates with chylomicrons, chylomicron remnants, very low density lipoproteins (VLDL) and intermediate density lipoproteins (IDL) but shows a preferential binding to high-density lipoproteins (HDL). It also binds a wide range of cellular receptors including the LDL receptor/LDLR, the LDL receptor-related proteins LRP1, LRP2 and LRP8 and the very low-density lipoprotein receptor/VLDLR that mediate the cellular uptake of the APOE-containing lipoprotein particles. Finally, APOE also has a heparin-binding activity and binds heparan-sulfate proteoglycans on the surface of cells, a property that supports the capture and the receptor-mediated uptake of APOE-containing lipoproteins by cells. A main function of APOE is to mediate lipoprotein clearance through the uptake of chylomicrons, VLDLs, and HDLs by hepatocytes. APOE is also involved in the biosynthesis by the liver of VLDLs as well as their uptake by peripheral tissues ensuring the delivery of triglycerides and energy storage in muscle, heart and adipose tissues. By participating in the lipoprotein-mediated distribution of lipids among tissues, APOE plays a critical role in plasma and tissues lipid homeostasis. APOE is also involved in two steps of reverse cholesterol transport, the HDLs-mediated transport of cholesterol from peripheral tissues to the liver, and thereby plays an important role in cholesterol homeostasis. First, it is functionally associated with ABCA1 in the biogenesis of HDLs in tissues. Second, it is enriched in circulating HDLs and mediates their uptake by hepatocytes. APOE also plays an important role in lipid transport in the central nervous system, regulating neuron survival and sprouting. This is Apolipoprotein E (APOE) from Aotus nancymaae (Ma's night monkey).